A 216-amino-acid chain; its full sequence is Uracil-DNA glycosylase (216 aa).

Catalysis depends on D60, which acts as the Proton acceptor.

This sequence belongs to the uracil-DNA glycosylase (UDG) superfamily. UNG family.

The protein localises to the cytoplasm. It catalyses the reaction Hydrolyzes single-stranded DNA or mismatched double-stranded DNA and polynucleotides, releasing free uracil.. Excises uracil residues from the DNA which can arise as a result of misincorporation of dUMP residues by DNA polymerase or due to deamination of cytosine. The sequence is that of Uracil-DNA glycosylase from Psychromonas ingrahamii (strain DSM 17664 / CCUG 51855 / 37).